Here is a 594-residue protein sequence, read N- to C-terminus: UvrABC system protein C (594 aa).

The region spanning 14-91 (DQPGCYLMKD…IKKYDPKYNI (78 aa)) is the GIY-YIG domain. In terms of domain architecture, UVR spans 196 to 231 (KEIRSELETKMYEASEKLEFERAKELRDQIAHIDAI).

This sequence belongs to the UvrC family. Interacts with UvrB in an incision complex.

It is found in the cytoplasm. In terms of biological role, the UvrABC repair system catalyzes the recognition and processing of DNA lesions. UvrC both incises the 5' and 3' sides of the lesion. The N-terminal half is responsible for the 3' incision and the C-terminal half is responsible for the 5' incision. This is UvrABC system protein C from Bacillus mycoides (strain KBAB4) (Bacillus weihenstephanensis).